A 202-amino-acid polypeptide reads, in one-letter code: Dephospho-CoA kinase (202 aa).

The region spanning 6-202 (KVSITGDLSS…EYFYALKGAL (197 aa)) is the DPCK domain. 14–19 (SSGKTE) is a binding site for ATP.

It belongs to the CoaE family.

The protein resides in the cytoplasm. The catalysed reaction is 3'-dephospho-CoA + ATP = ADP + CoA + H(+). It participates in cofactor biosynthesis; coenzyme A biosynthesis; CoA from (R)-pantothenate: step 5/5. In terms of biological role, catalyzes the phosphorylation of the 3'-hydroxyl group of dephosphocoenzyme A to form coenzyme A. The chain is Dephospho-CoA kinase from Chlamydia caviae (strain ATCC VR-813 / DSM 19441 / 03DC25 / GPIC) (Chlamydophila caviae).